Consider the following 738-residue polypeptide: NAD(P)H-quinone oxidoreductase subunit 5, chloroplastic (738 aa).

Helical transmembrane passes span 9–29, 39–59, 89–109, 125–145, 147–167, 185–205, 219–239, 258–278, 280–300, 327–347, 354–374, 396–416, 425–445, 542–562, 610–630, 691–711, and 717–737; these read WVIP…LFLI, IWAF…LHLS, VDPL…LVLI, FVYI…SNLI, IYFF…FWFT, GDFG…SLEF, NGIN…GAVA, TPIS…FLLA, LLPL…VGTI, LGYM…FHLI, ALLF…VGYS, TTFL…CFWS, WLYS…TAFY, LFPL…GIPF, SLAI…YSFF, GVID…GEEI, and GRIS…LFFI.

It belongs to the complex I subunit 5 family. NDH is composed of at least 16 different subunits, 5 of which are encoded in the nucleus.

The protein localises to the plastid. Its subcellular location is the chloroplast thylakoid membrane. It carries out the reaction a plastoquinone + NADH + (n+1) H(+)(in) = a plastoquinol + NAD(+) + n H(+)(out). The enzyme catalyses a plastoquinone + NADPH + (n+1) H(+)(in) = a plastoquinol + NADP(+) + n H(+)(out). NDH shuttles electrons from NAD(P)H:plastoquinone, via FMN and iron-sulfur (Fe-S) centers, to quinones in the photosynthetic chain and possibly in a chloroplast respiratory chain. The immediate electron acceptor for the enzyme in this species is believed to be plastoquinone. Couples the redox reaction to proton translocation, and thus conserves the redox energy in a proton gradient. The polypeptide is NAD(P)H-quinone oxidoreductase subunit 5, chloroplastic (ndhF) (Sorghum bicolor (Sorghum)).